The sequence spans 179 residues: ATP synthase subunit delta (179 aa).

It belongs to the ATPase delta chain family. F-type ATPases have 2 components, F(1) - the catalytic core - and F(0) - the membrane proton channel. F(1) has five subunits: alpha(3), beta(3), gamma(1), delta(1), epsilon(1). F(0) has three main subunits: a(1), b(2) and c(10-14). The alpha and beta chains form an alternating ring which encloses part of the gamma chain. F(1) is attached to F(0) by a central stalk formed by the gamma and epsilon chains, while a peripheral stalk is formed by the delta and b chains.

Its subcellular location is the cell membrane. F(1)F(0) ATP synthase produces ATP from ADP in the presence of a proton or sodium gradient. F-type ATPases consist of two structural domains, F(1) containing the extramembraneous catalytic core and F(0) containing the membrane proton channel, linked together by a central stalk and a peripheral stalk. During catalysis, ATP synthesis in the catalytic domain of F(1) is coupled via a rotary mechanism of the central stalk subunits to proton translocation. Its function is as follows. This protein is part of the stalk that links CF(0) to CF(1). It either transmits conformational changes from CF(0) to CF(1) or is implicated in proton conduction. The polypeptide is ATP synthase subunit delta (Clostridium botulinum (strain Okra / Type B1)).